Consider the following 607-residue polypeptide: Aspartate--tRNA(Asp/Asn) ligase (607 aa).

Glu-168 provides a ligand contact to L-aspartate. The tract at residues 192-195 (QLFK) is aspartate. Residue Arg-214 participates in L-aspartate binding. ATP contacts are provided by residues 214-216 (RDE) and Gln-223. His-449 contributes to the L-aspartate binding site. Position 483 (Glu-483) interacts with ATP. Residue Arg-490 participates in L-aspartate binding. Residue 535–538 (GWDR) participates in ATP binding. Residues 578–607 (LEAGVDARPKPEARAQAGTAGPAAPVADPT) are disordered. Over residues 580–590 (AGVDARPKPEA) the composition is skewed to basic and acidic residues. Residues 591–607 (RAQAGTAGPAAPVADPT) show a composition bias toward low complexity.

It belongs to the class-II aminoacyl-tRNA synthetase family. Type 1 subfamily. As to quaternary structure, homodimer.

The protein resides in the cytoplasm. The enzyme catalyses tRNA(Asx) + L-aspartate + ATP = L-aspartyl-tRNA(Asx) + AMP + diphosphate. In terms of biological role, aspartyl-tRNA synthetase with relaxed tRNA specificity since it is able to aspartylate not only its cognate tRNA(Asp) but also tRNA(Asn). Reaction proceeds in two steps: L-aspartate is first activated by ATP to form Asp-AMP and then transferred to the acceptor end of tRNA(Asp/Asn). This is Aspartate--tRNA(Asp/Asn) ligase from Salinispora tropica (strain ATCC BAA-916 / DSM 44818 / JCM 13857 / NBRC 105044 / CNB-440).